The chain runs to 264 residues: Methionine aminopeptidase (264 aa).

Substrate is bound at residue H79. 3 residues coordinate a divalent metal cation: D97, D108, and H171. H178 provides a ligand contact to substrate. Residues E204 and E235 each coordinate a divalent metal cation.

The protein belongs to the peptidase M24A family. Methionine aminopeptidase type 1 subfamily. Monomer. Co(2+) is required as a cofactor. The cofactor is Zn(2+). Requires Mn(2+) as cofactor. It depends on Fe(2+) as a cofactor.

It catalyses the reaction Release of N-terminal amino acids, preferentially methionine, from peptides and arylamides.. In terms of biological role, removes the N-terminal methionine from nascent proteins. The N-terminal methionine is often cleaved when the second residue in the primary sequence is small and uncharged (Met-Ala-, Cys, Gly, Pro, Ser, Thr, or Val). Requires deformylation of the N(alpha)-formylated initiator methionine before it can be hydrolyzed. This chain is Methionine aminopeptidase, found in Salmonella typhi.